A 1104-amino-acid polypeptide reads, in one-letter code: MNRKKGDKGFESPRPYKLTHQVVCINNINFQRKSVVGFVELTIFPTVANLNRIKLNSKQCRIYRVRINDLEAAFIYNDPTLEVCHSESKQRNLNYFSNAYAAAVSAVDPDAGNGELCIKVPSELWKHVDELKVLKIHINFSLDQPKGGLHFVVPSVEGSMAERGAHVFSCGYQNSTRFWFPCVDSYSELCTWKLEFTVDAAMVAVSNGDLVETVYTHDMRKKTFHYMLTIPTAASNISLAIGPFEILVDPYMHEVTHFCLPQLLPLLKHTTSYIHEVFEFYEEILTCRYPYSCFKTVFIDEAYVEVAAYASMSIFSTNLLHSAMIIDETPLTRRCLAQALAQQFFGCFISRMSWSDEWVLKGISGYIYGLWMKKTFGVNEYHHWIKEELDKIVAYELKTGGVLLHPIFGGGKEKDNPASHLHFSIKHPHTLSWEYYTMFQCKAHLVMRLIENRISMEFMLQVFNKLLSLASTASSQKFQSHMWSQMLVSTYGFLKSISNVSGKDIQPLIKQWLDQSGVVKFYGSFAFNRKRNVLELEIKQDYTSPGTQKYVGPLKVTVQELDGSFNHTLQIEENSLKHDIPCHSKSRRNKKKKIPLMNGEEVDMDLSAMEADSPLLWIRIDPDMSVLRKVEFEQADFMWQYELRYERDVVAQQESILALEKFPTPASRLALTDILEQEQCFYRVRMSACFCLAKIANSMVSTWTGPPAMKSLFTRMFCCKTCPNIVKTNNFMSFQSYFLQKTMPVAMALLRDVHNLCPKEVLTFILDLIKYNDNRKNKFSDNYYRAEMIDALANSVTPAVSVNNEVRTLDNLNPDVRLILEEITRFLNMEKLLPSYRHTITVSCLRAIRVLQKNGHVPSDASLFKSYAEYGHFVDIRIAALEAVVDYTKVDRSYEELQWLLNMIQTDPVPYVRHKILNMLTKNPPFTKNMESPLCNEALVDQLWKLMNSGTAHDWRLRCGAVDLYFTLFGLSRPSCLPLPELGLVLNLKEKKAVLNPTIIPEAGVGNQFSSSQDEEEVDMDTVHDSQAFISHHLNMLERPSTPGLSKYRPHHHHHHHEHKKKKKKHKHKHKHKHKHDSKDKDREPFAFSSPASGRSVRSPSLSD.

A disordered region spans residues 1040–1104; sequence PSTPGLSKYR…RSVRSPSLSD (65 aa). The span at 1048-1076 shows a compositional bias: basic residues; sequence YRPHHHHHHHEHKKKKKKHKHKHKHKHKH. Phosphoserine is present on residues serine 1090, serine 1093, serine 1099, serine 1101, and serine 1103. The span at 1090 to 1104 shows a compositional bias: polar residues; sequence SPASGRSVRSPSLSD.

Belongs to the TAF2 family. In terms of assembly, component of the TFIID basal transcription factor complex, composed of TATA-box-binding protein TBP, and a number of TBP-associated factors (TAFs), including TAF1, TAF2, TAF3, TAF4, TAF5, TAF6, TAF7, TAF8, TAF9, TAF10, TAF11, TAF12 and TAF13. Interacts with TAF2C1. Component of the TFTC-HAT complex.

The protein localises to the nucleus. Its function is as follows. The TFIID basal transcription factor complex plays a major role in the initiation of RNA polymerase II (Pol II)-dependent transcription. TFIID recognizes and binds promoters with or without a TATA box via its subunit TBP, a TATA-box-binding protein, and promotes assembly of the pre-initiation complex (PIC). The TFIID complex consists of TBP and TBP-associated factors (TAFs), including TAF1, TAF2, TAF3, TAF4, TAF5, TAF6, TAF7, TAF8, TAF9, TAF10, TAF11, TAF12 and TAF13. TAF2 forms a promoter DNA binding subcomplex of TFIID, together with TAF7 and TAF1. The sequence is that of Transcription initiation factor TFIID subunit 2 (Taf2) from Mus musculus (Mouse).